The following is a 138-amino-acid chain: Large ribosomal subunit protein bL19 (138 aa).

The protein belongs to the bacterial ribosomal protein bL19 family.

In terms of biological role, this protein is located at the 30S-50S ribosomal subunit interface and may play a role in the structure and function of the aminoacyl-tRNA binding site. In Rickettsia canadensis (strain McKiel), this protein is Large ribosomal subunit protein bL19.